A 445-amino-acid polypeptide reads, in one-letter code: UPF0210 protein SPH_0352 (445 aa).

This sequence belongs to the UPF0210 family. Homodimer.

The polypeptide is UPF0210 protein SPH_0352 (Streptococcus pneumoniae (strain Hungary19A-6)).